We begin with the raw amino-acid sequence, 63 residues long: 2-hydroxymuconate tautomerase (63 aa).

The active-site Proton acceptor; via imino nitrogen is the proline 2.

Belongs to the 4-oxalocrotonate tautomerase family. In terms of assembly, homohexamer.

The catalysed reaction is (2Z,4E)-2-hydroxyhexa-2,4-dienedioate = (3E)-2-oxohex-3-enedioate. Its pathway is aromatic compound metabolism; salicylate degradation. Functionally, catalyzes the ketonization of 2-hydroxymuconate stereoselectively to yield 2-oxo-3-hexenedioate. The sequence is that of 2-hydroxymuconate tautomerase (tdnL) from Pseudomonas putida (Arthrobacter siderocapsulatus).